The primary structure comprises 674 residues: Methionine--tRNA ligase (674 aa).

The 'HIGH' region signature appears at 11 to 21 (PYANGDLHLGH). Positions 142, 145, 155, and 158 each coordinate Zn(2+). Residues 330–334 (KMSKS) carry the 'KMSKS' region motif. Lys333 contributes to the ATP binding site. Positions 574-674 (DFMKVDLRIA…EGAQPGMRVK (101 aa)) constitute a tRNA-binding domain.

This sequence belongs to the class-I aminoacyl-tRNA synthetase family. MetG type 1 subfamily. In terms of assembly, homodimer. It depends on Zn(2+) as a cofactor.

The protein localises to the cytoplasm. It carries out the reaction tRNA(Met) + L-methionine + ATP = L-methionyl-tRNA(Met) + AMP + diphosphate. Is required not only for elongation of protein synthesis but also for the initiation of all mRNA translation through initiator tRNA(fMet) aminoacylation. This Francisella tularensis subsp. holarctica (strain OSU18) protein is Methionine--tRNA ligase.